The following is a 1199-amino-acid chain: DNA-directed RNA polymerase subunit beta' (1199 aa).

Residues cysteine 60, cysteine 62, cysteine 75, and cysteine 78 each coordinate Zn(2+). Residues aspartate 449, aspartate 451, and aspartate 453 each contribute to the Mg(2+) site. 4 residues coordinate Zn(2+): cysteine 818, cysteine 892, cysteine 899, and cysteine 902.

It belongs to the RNA polymerase beta' chain family. In terms of assembly, the RNAP catalytic core consists of 2 alpha, 1 beta, 1 beta' and 1 omega subunit. When a sigma factor is associated with the core the holoenzyme is formed, which can initiate transcription. The cofactor is Mg(2+). Requires Zn(2+) as cofactor.

The catalysed reaction is RNA(n) + a ribonucleoside 5'-triphosphate = RNA(n+1) + diphosphate. Functionally, DNA-dependent RNA polymerase catalyzes the transcription of DNA into RNA using the four ribonucleoside triphosphates as substrates. This chain is DNA-directed RNA polymerase subunit beta', found in Bacillus velezensis (strain DSM 23117 / BGSC 10A6 / LMG 26770 / FZB42) (Bacillus amyloliquefaciens subsp. plantarum).